Consider the following 269-residue polypeptide: 5'-nucleotidase SurE (269 aa).

The a divalent metal cation site is built by Asp11, Asp12, Ser43, and Asn101.

This sequence belongs to the SurE nucleotidase family. A divalent metal cation is required as a cofactor.

It localises to the cytoplasm. The catalysed reaction is a ribonucleoside 5'-phosphate + H2O = a ribonucleoside + phosphate. Nucleotidase that shows phosphatase activity on nucleoside 5'-monophosphates. The chain is 5'-nucleotidase SurE from Prochlorococcus marinus (strain MIT 9211).